Here is a 490-residue protein sequence, read N- to C-terminus: Glutamate--tRNA ligase (490 aa).

A 'HIGH' region motif is present at residues 10–20 (PSPTGSLHIGG). The 'KMSKS' region motif lies at 251-255 (KLSKR). Lysine 254 provides a ligand contact to ATP.

The protein belongs to the class-I aminoacyl-tRNA synthetase family. Glutamate--tRNA ligase type 1 subfamily. In terms of assembly, monomer.

It localises to the cytoplasm. The catalysed reaction is tRNA(Glu) + L-glutamate + ATP = L-glutamyl-tRNA(Glu) + AMP + diphosphate. In terms of biological role, catalyzes the attachment of glutamate to tRNA(Glu) in a two-step reaction: glutamate is first activated by ATP to form Glu-AMP and then transferred to the acceptor end of tRNA(Glu). The protein is Glutamate--tRNA ligase of Moorella thermoacetica (strain ATCC 39073 / JCM 9320).